The primary structure comprises 299 residues: S-formylglutathione hydrolase (299 aa).

Residues Met1 and His140 each contribute to the Cu cation site. Active-site charge relay system residues include Ser161, Asp241, and His276.

The protein belongs to the esterase D family. Monomer.

The protein localises to the cytoplasm. The catalysed reaction is S-formylglutathione + H2O = formate + glutathione + H(+). Serine hydrolase involved in the detoxification of formaldehyde. The chain is S-formylglutathione hydrolase from Saccharomyces cerevisiae (strain ATCC 204508 / S288c) (Baker's yeast).